The sequence spans 317 residues: MHNYLDFEKPISDLEGKIIELKKLATEDESIDTTDEIGRLEVRVREAIVEIYSKLNPWQKTQVARHPQRPHFVDYAKTLFQEFTPLAGDRKFSEDAAIQAGLARFRGQPVAVVGQEKGNDTKTRLKHNFGSPRPEGYRKAIRILEMADRFGLPVISLVDTAGAYPGVGAEERGQAEAIARSTEMCLGVKVPLVSVVIGEGGSGGAIAIATGNKVYMLEHSIYSVISPEGAASILWRDSTRAREAATNMKITAEDLKSLGVIDGIISEPLGGAHRDPDSVIAATGDVIANALGEMASRSGEQLRNERRQKFLNMGRNL.

Residues 40–293 enclose the CoA carboxyltransferase C-terminal domain; it reads LEVRVREAIV…GDVIANALGE (254 aa).

It belongs to the AccA family. Acetyl-CoA carboxylase is a heterohexamer composed of biotin carboxyl carrier protein (AccB), biotin carboxylase (AccC) and two subunits each of ACCase subunit alpha (AccA) and ACCase subunit beta (AccD).

The protein localises to the cytoplasm. It catalyses the reaction N(6)-carboxybiotinyl-L-lysyl-[protein] + acetyl-CoA = N(6)-biotinyl-L-lysyl-[protein] + malonyl-CoA. The protein operates within lipid metabolism; malonyl-CoA biosynthesis; malonyl-CoA from acetyl-CoA: step 1/1. Functionally, component of the acetyl coenzyme A carboxylase (ACC) complex. First, biotin carboxylase catalyzes the carboxylation of biotin on its carrier protein (BCCP) and then the CO(2) group is transferred by the carboxyltransferase to acetyl-CoA to form malonyl-CoA. This chain is Acetyl-coenzyme A carboxylase carboxyl transferase subunit alpha, found in Rhizobium leguminosarum bv. trifolii (strain WSM2304).